Here is a 695-residue protein sequence, read N- to C-terminus: Segment polarity protein dishevelled homolog DVL-1 (695 aa).

The DIX domain occupies 1–85 (MAETKIIYHM…RVVSWLVLAE (85 aa)). A disordered region spans residues 89–235 (SDAGSQGTDS…QRLRQTDRAS (147 aa)). Residues 142-151 (SHRRERARRR) are compositionally biased toward basic residues. Basic and acidic residues predominate over residues 152–171 (NRDEAARTNGHPRGDRRRDL). Residues 177–192 (SASTVLSSELESSSFI) are compositionally biased toward low complexity. Phosphoserine is present on Ser194. A compositionally biased stretch (low complexity) spans 201-214 (SRLSSSTEQSTSSR). A compositionally biased stretch (basic residues) spans 215-228 (LVRKHKCRRRKQRL). Positions 251 to 323 (TVTLNMERHH…NDDAVRVLRE (73 aa)) constitute a PDZ domain. The DEP domain occupies 425–499 (PDSGLEIRDR…SEQCYYVFGD (75 aa)). Residues 559–580 (SCGSGSAGSQQSEGSKSSGSTR) are compositionally biased toward low complexity. The disordered stretch occupies residues 559–641 (SCGSGSAGSQ…SQASAVAPGL (83 aa)). Residues 622–635 (SQLSRGSSPRSQAS) are compositionally biased toward polar residues.

It belongs to the DSH family. In terms of assembly, interacts with CXXC4. Interacts (via PDZ domain) with TMEM88. Interacts with BRD7 and INVS. Interacts (via PDZ domain) with VANGL1 and VANGL2 (via C-terminus). Interacts (via PDZ domain) with NXN. Interacts with ARRB1; the interaction is enhanced by phosphorylation of DVL1. Interacts with CYLD. Interacts (via PDZ domain) with RYK. Self-associates (via DIX domain) and forms higher homooligomers. Interacts (via PDZ domain) with DACT1 and FZD7, where DACT1 and FZD7 compete for the same binding site. Interacts (via DEP domain) with MUSK; the interaction is direct and mediates the formation a DVL1, MUSK and PAK1 ternary complex involved in AChR clustering. Interacts with DCDC2. Interacts with FOXK2. Interacts with PKD1 (via extracellular domain). Interacts (via PDZ domain) with CCDC88C/DAPLE; competes with CCDC88C for binding to frizzled receptor FZD7 and dissociates from CCDC88C following initiation of non-canonical Wnt signaling when CCDC88C displaces DVL1 from ligand-activated FZD7. In terms of processing, ubiquitinated; undergoes both 'Lys-48'-linked ubiquitination, leading to its subsequent degradation by the ubiquitin-proteasome pathway, and 'Lys-63'-linked ubiquitination. The interaction with INVS is required for ubiquitination. Deubiquitinated by CYLD, which acts on 'Lys-63'-linked ubiquitin chains. In terms of tissue distribution, high levels are seen in the brain, testis and kidney, lower levels in the ovary, breast, muscle, liver and small intestine, and very low levels are seen in the spleen and thymus. A moderate level expression is seen in the heart.

The protein localises to the cell membrane. Its subcellular location is the cytoplasm. The protein resides in the cytosol. It localises to the cytoplasmic vesicle. Functionally, participates in Wnt signaling by binding to the cytoplasmic C-terminus of frizzled family members and transducing the Wnt signal to down-stream effectors. Plays a role both in canonical and non-canonical Wnt signaling. Plays a role in the signal transduction pathways mediated by multiple Wnt genes. Required for LEF1 activation upon WNT1 and WNT3A signaling. DVL1 and PAK1 form a ternary complex with MUSK which is important for MUSK-dependent regulation of AChR clustering during the formation of the neuromuscular junction (NMJ). The polypeptide is Segment polarity protein dishevelled homolog DVL-1 (Dvl1) (Mus musculus (Mouse)).